The following is a 705-amino-acid chain: Polyribonucleotide nucleotidyltransferase (705 aa).

Positions 487 and 493 each coordinate Mg(2+). Residues 554–613 enclose the KH domain; the sequence is PKILTMSINPDKIRDVIGPSGKQINKIIEDTGVKIDIEQDGTIFISSTDESMNQKAKKII. The 69-residue stretch at 623-691 folds into the S1 motif domain; it reads GQLYLGKVKR…KQGRVNLSRK (69 aa).

This sequence belongs to the polyribonucleotide nucleotidyltransferase family. It depends on Mg(2+) as a cofactor.

It localises to the cytoplasm. It catalyses the reaction RNA(n+1) + phosphate = RNA(n) + a ribonucleoside 5'-diphosphate. Involved in mRNA degradation. Catalyzes the phosphorolysis of single-stranded polyribonucleotides processively in the 3'- to 5'-direction. This is Polyribonucleotide nucleotidyltransferase from Bacillus licheniformis (strain ATCC 14580 / DSM 13 / JCM 2505 / CCUG 7422 / NBRC 12200 / NCIMB 9375 / NCTC 10341 / NRRL NRS-1264 / Gibson 46).